Here is a 229-residue protein sequence, read N- to C-terminus: Isopentenyl-diphosphate delta-isomerase (229 aa).

Lysine 39 is a substrate binding site. Residues histidine 43 and histidine 54 each contribute to the Mg(2+) site. The Nudix hydrolase domain maps to 52–202 (LLHRAFSMFI…QYGFTPWFKL (151 aa)). Positions 72 and 77 each coordinate substrate. Residue cysteine 89 is part of the active site. Serine 90 provides a ligand contact to substrate. Mg(2+) contacts are provided by glutamate 152 and glutamate 154. Glutamate 154 is a catalytic residue.

Belongs to the IPP isomerase type 1 family. Requires Mg(2+) as cofactor.

It localises to the cytoplasm. It is found in the nucleus. The enzyme catalyses isopentenyl diphosphate = dimethylallyl diphosphate. Its pathway is isoprenoid biosynthesis; dimethylallyl diphosphate biosynthesis; dimethylallyl diphosphate from isopentenyl diphosphate: step 1/1. Functionally, isopentenyl-diphosphate delta-isomerase; part of the second module of ergosterol biosynthesis pathway that includes the middle steps of the pathway. Idi1 catalyzes the 1,3-allylic rearrangement of isopentenyl (IPP) to its highly electrophilic allylic isomer, dimethylallyl diphosphate (DMAPP). The second module is carried out in the vacuole and involves the formation of farnesyl diphosphate, which is also an important intermediate in the biosynthesis of ubiquinone, dolichol, heme and prenylated proteins. Activity by the mevalonate kinase erg12 first converts mevalonate into 5-phosphomevalonate. 5-phosphomevalonate is then further converted to 5-diphosphomevalonate by the phosphomevalonate kinase erg8. The diphosphomevalonate decarboxylase mvd1 then produces isopentenyl diphosphate. The isopentenyl-diphosphate delta-isomerase idi1 then catalyzes the 1,3-allylic rearrangement of the homoallylic substrate isopentenyl (IPP) to its highly electrophilic allylic isomer, dimethylallyl diphosphate (DMAPP). Finally the farnesyl diphosphate synthase fps1 catalyzes the sequential condensation of isopentenyl pyrophosphate with dimethylallyl pyrophosphate, and then with the resultant geranylpyrophosphate to the ultimate product farnesyl pyrophosphate. The polypeptide is Isopentenyl-diphosphate delta-isomerase (Schizosaccharomyces pombe (strain 972 / ATCC 24843) (Fission yeast)).